Consider the following 99-residue polypeptide: Putative septation protein SpoVG (99 aa).

It belongs to the SpoVG family.

Functionally, could be involved in septation. In Onion yellows phytoplasma (strain OY-M), this protein is Putative septation protein SpoVG.